The following is a 316-amino-acid chain: MTSKNPIQKALYLAFERAQWSVLRDAVPMTLSEQDLENLRGINEKVSLTEVTDIYLPLSRLLNLIVKAKQQRGLVLDEFLGQKPSSSPYIISIAGSVAVGKSTTARILQALLRHWPEHPKVDLVTTDGFLYPLADLKRKGLLQRKGFPESYDMKMLVEFIAAVKSGQAHVNAPIYSHVTYDRIRGQHQTVSQPDILILEGLNVLQTGLDSPVDIRRPFVSDFVDFSIYVDAEEHLLKQWYQERFLQFRKGAFSDEKSYFHHYASLTDDEANVIAAKIWDTINGPNLQLNIQPTRERAHLILQKGQDHLMSHVLLRK.

95-102 (GSVAVGKS) contacts ATP.

Belongs to the prokaryotic pantothenate kinase family.

It is found in the cytoplasm. The enzyme catalyses (R)-pantothenate + ATP = (R)-4'-phosphopantothenate + ADP + H(+). The protein operates within cofactor biosynthesis; coenzyme A biosynthesis; CoA from (R)-pantothenate: step 1/5. In Shewanella sp. (strain MR-4), this protein is Pantothenate kinase.